The following is a 353-amino-acid chain: Protein-glutamate methylesterase/protein-glutamine glutaminase (353 aa).

The 118-residue stretch at 6–123 (RVLVIDDSAL…ARGLKAMLSE (118 aa)) folds into the Response regulatory domain. Aspartate 57 is modified (4-aspartylphosphate). Residues 159 to 351 (AESTDKVIAI…PRIVDLLSER (193 aa)) form the CheB-type methylesterase domain. Active-site residues include serine 171, histidine 197, and aspartate 293.

This sequence belongs to the CheB family. Post-translationally, phosphorylated by CheA. Phosphorylation of the N-terminal regulatory domain activates the methylesterase activity.

The protein resides in the cytoplasm. The enzyme catalyses [protein]-L-glutamate 5-O-methyl ester + H2O = L-glutamyl-[protein] + methanol + H(+). It carries out the reaction L-glutaminyl-[protein] + H2O = L-glutamyl-[protein] + NH4(+). Its function is as follows. Involved in chemotaxis. Part of a chemotaxis signal transduction system that modulates chemotaxis in response to various stimuli. Catalyzes the demethylation of specific methylglutamate residues introduced into the chemoreceptors (methyl-accepting chemotaxis proteins or MCP) by CheR. Also mediates the irreversible deamidation of specific glutamine residues to glutamic acid. This is Protein-glutamate methylesterase/protein-glutamine glutaminase from Syntrophotalea carbinolica (strain DSM 2380 / NBRC 103641 / GraBd1) (Pelobacter carbinolicus).